Here is a 1322-residue protein sequence, read N- to C-terminus: Centrosome-associated protein Alms1a (1322 aa).

Disordered stretches follow at residues methionine 1–arginine 26, threonine 53–threonine 135, serine 165–lysine 193, glutamate 252–tyrosine 442, lysine 464–proline 614, glutamate 657–aspartate 752, serine 814–proline 844, alanine 856–arginine 911, and alanine 1083–methionine 1109. Positions threonine 53–threonine 62 are enriched in low complexity. Over residues methionine 78 to arginine 111 the composition is skewed to basic and acidic residues. Positions serine 165–glutamate 189 are enriched in polar residues. A compositionally biased stretch (low complexity) spans serine 279–lysine 292. Positions glutamate 309–arginine 318 are enriched in polar residues. Residues serine 319 to serine 330 are compositionally biased toward low complexity. Over residues asparagine 338–arginine 350 the composition is skewed to polar residues. Acidic residues predominate over residues glutamate 354–serine 364. Basic and acidic residues-rich tracts occupy residues isoleucine 365 to isoleucine 375 and serine 394 to arginine 408. Over residues leucine 409 to serine 430 the composition is skewed to low complexity. Basic and acidic residues-rich tracts occupy residues lysine 464–glutamine 487, proline 495–glutamine 512, and arginine 519–glutamine 538. 2 stretches are compositionally biased toward low complexity: residues serine 594 to serine 605 and glutamate 657 to serine 669. The span at glycine 678 to serine 696 shows a compositional bias: polar residues. The segment covering alanine 714–glycine 735 has biased composition (low complexity). 2 stretches are compositionally biased toward polar residues: residues valine 737–threonine 751 and threonine 822–serine 832. Positions leucine 893 to histidine 907 are enriched in pro residues. Residues serine 1092 to serine 1107 are compositionally biased toward low complexity. The interaction with Klp10A stretch occupies residues methionine 1115 to methionine 1322. An ALMS motif region spans residues serine 1190–alanine 1309.

Belongs to the ALMS1 family. In terms of assembly, interacts (via C-terminus) with Klp10A. Interacts with SAK. As to expression, expressed in all germlines, including germline stem cells and spermatogonia.

It localises to the cytoplasm. It is found in the cytoskeleton. Its subcellular location is the microtubule organizing center. The protein localises to the centrosome. The protein resides in the centriole. Its function is as follows. In asymmetrically dividing germline stem cells (GSCs), plays a critical role in ensuring centrosome duplication, which is essential for the production of centrosomes and centrioles in all downstream germ cells. Might recruit SAK for daughter centriole duplication. The protein is Centrosome-associated protein Alms1a of Drosophila melanogaster (Fruit fly).